Consider the following 317-residue polypeptide: Protoheme IX farnesyltransferase (317 aa).

8 helical membrane passes run 39–59 (VLYL…GGIN), 60–80 (PILG…AGAI), 109–129 (GALA…WLAT), 131–151 (LLAA…YTMW), 160–180 (IVIG…AATG), 184–204 (LLPV…FWAL), 249–269 (VLHL…LAFV), and 297–317 (FKFS…DHLV).

Belongs to the UbiA prenyltransferase family. Protoheme IX farnesyltransferase subfamily.

It is found in the cell inner membrane. The catalysed reaction is heme b + (2E,6E)-farnesyl diphosphate + H2O = Fe(II)-heme o + diphosphate. The protein operates within porphyrin-containing compound metabolism; heme O biosynthesis; heme O from protoheme: step 1/1. Its function is as follows. Converts heme B (protoheme IX) to heme O by substitution of the vinyl group on carbon 2 of heme B porphyrin ring with a hydroxyethyl farnesyl side group. The polypeptide is Protoheme IX farnesyltransferase (Acidiphilium cryptum (strain JF-5)).